The chain runs to 147 residues: Small ribosomal subunit protein uS12 (147 aa).

The protein belongs to the universal ribosomal protein uS12 family. As to quaternary structure, part of the 30S ribosomal subunit.

In terms of biological role, with S4 and S5 plays an important role in translational accuracy. Located at the interface of the 30S and 50S subunits. The chain is Small ribosomal subunit protein uS12 from Sulfurisphaera tokodaii (strain DSM 16993 / JCM 10545 / NBRC 100140 / 7) (Sulfolobus tokodaii).